The primary structure comprises 407 residues: Protein COS9 (407 aa).

Transmembrane regions (helical) follow at residues threonine 75–isoleucine 95, isoleucine 98–isoleucine 118, and isoleucine 261–tryptophan 281.

Belongs to the DUP/COS family.

The protein resides in the membrane. In Saccharomyces cerevisiae (strain ATCC 204508 / S288c) (Baker's yeast), this protein is Protein COS9 (COS9).